A 222-amino-acid polypeptide reads, in one-letter code: Cytidylate kinase (222 aa).

Residue 10 to 18 (GPAGSGKSS) coordinates ATP.

This sequence belongs to the cytidylate kinase family. Type 1 subfamily.

The protein resides in the cytoplasm. It carries out the reaction CMP + ATP = CDP + ADP. The enzyme catalyses dCMP + ATP = dCDP + ADP. This chain is Cytidylate kinase, found in Acholeplasma laidlawii (strain PG-8A).